The following is a 319-amino-acid chain: ATP-dependent 6-phosphofructokinase (319 aa).

An ATP-binding site is contributed by glycine 11. 21 to 25 serves as a coordination point for ADP; the sequence is RAVVR. Residues 72 to 73 and 102 to 105 each bind ATP; these read RC and GEGS. Position 103 (glutamate 103) interacts with Mg(2+). 126 to 128 serves as a coordination point for substrate; sequence TID. The active-site Proton acceptor is aspartate 128. An ADP-binding site is contributed by lysine 155. Residues arginine 163 and 170–172 contribute to the substrate site; that span reads MGR. Residues 186 to 188, arginine 212, and 214 to 216 contribute to the ADP site; these read GAE and KIN. Residues glutamate 223, arginine 244, and 250–253 contribute to the substrate site; that span reads HVQR.

It belongs to the phosphofructokinase type A (PFKA) family. ATP-dependent PFK group I subfamily. Prokaryotic clade 'B1' sub-subfamily. As to quaternary structure, homotetramer. Requires Mg(2+) as cofactor.

The protein localises to the cytoplasm. It catalyses the reaction beta-D-fructose 6-phosphate + ATP = beta-D-fructose 1,6-bisphosphate + ADP + H(+). The protein operates within carbohydrate degradation; glycolysis; D-glyceraldehyde 3-phosphate and glycerone phosphate from D-glucose: step 3/4. With respect to regulation, allosterically activated by ADP and other diphosphonucleosides, and allosterically inhibited by phosphoenolpyruvate. In terms of biological role, catalyzes the phosphorylation of D-fructose 6-phosphate to fructose 1,6-bisphosphate by ATP, the first committing step of glycolysis. This is ATP-dependent 6-phosphofructokinase from Thermotoga neapolitana (strain ATCC 49049 / DSM 4359 / NBRC 107923 / NS-E).